We begin with the raw amino-acid sequence, 60 residues long: UPF0434 protein YcaR (60 aa).

This sequence belongs to the UPF0434 family.

The sequence is that of UPF0434 protein YcaR from Escherichia coli O81 (strain ED1a).